A 269-amino-acid polypeptide reads, in one-letter code: Shikimate dehydrogenase (NADP(+)) (269 aa).

Shikimate contacts are provided by residues 17 to 19 (SKS) and threonine 64. Lysine 68 acts as the Proton acceptor in catalysis. Glutamate 80 contacts NADP(+). Asparagine 89 and aspartate 105 together coordinate shikimate. Residues 130–134 (GAGGA), 154–159 (NRTHTK), and methionine 213 contribute to the NADP(+) site. Tyrosine 215 contacts shikimate. Glycine 237 serves as a coordination point for NADP(+).

This sequence belongs to the shikimate dehydrogenase family. Homodimer.

It carries out the reaction shikimate + NADP(+) = 3-dehydroshikimate + NADPH + H(+). The protein operates within metabolic intermediate biosynthesis; chorismate biosynthesis; chorismate from D-erythrose 4-phosphate and phosphoenolpyruvate: step 4/7. In terms of biological role, involved in the biosynthesis of the chorismate, which leads to the biosynthesis of aromatic amino acids. Catalyzes the reversible NADPH linked reduction of 3-dehydroshikimate (DHSA) to yield shikimate (SA). The sequence is that of Shikimate dehydrogenase (NADP(+)) from Neisseria mucosa.